A 357-amino-acid polypeptide reads, in one-letter code: 3-dehydroquinate synthase (357 aa).

NAD(+) contacts are provided by residues 104–108 (GVVGD), 128–129 (TT), K141, and 168–171 (FLET). Positions 183, 243, and 260 each coordinate Zn(2+).

It belongs to the sugar phosphate cyclases superfamily. Dehydroquinate synthase family. Requires NAD(+) as cofactor. Co(2+) is required as a cofactor. The cofactor is Zn(2+).

Its subcellular location is the cytoplasm. The enzyme catalyses 7-phospho-2-dehydro-3-deoxy-D-arabino-heptonate = 3-dehydroquinate + phosphate. It functions in the pathway metabolic intermediate biosynthesis; chorismate biosynthesis; chorismate from D-erythrose 4-phosphate and phosphoenolpyruvate: step 2/7. Functionally, catalyzes the conversion of 3-deoxy-D-arabino-heptulosonate 7-phosphate (DAHP) to dehydroquinate (DHQ). This is 3-dehydroquinate synthase from Streptococcus pyogenes serotype M3 (strain ATCC BAA-595 / MGAS315).